Reading from the N-terminus, the 267-residue chain is Phosphate import ATP-binding protein PstB (267 aa).

Residues 21 to 262 (VAARNLDFYY…PSKQQTEDYI (242 aa)) enclose the ABC transporter domain. Residue 53-60 (GPSGCGKS) coordinates ATP.

Belongs to the ABC transporter superfamily. Phosphate importer (TC 3.A.1.7) family. As to quaternary structure, the complex is composed of two ATP-binding proteins (PstB), two transmembrane proteins (PstC and PstA) and a solute-binding protein (PstS).

Its subcellular location is the cell inner membrane. The catalysed reaction is phosphate(out) + ATP + H2O = ADP + 2 phosphate(in) + H(+). Part of the ABC transporter complex PstSACB involved in phosphate import. Responsible for energy coupling to the transport system. The polypeptide is Phosphate import ATP-binding protein PstB (Xanthomonas campestris pv. campestris (strain 8004)).